A 383-amino-acid chain; its full sequence is 3-phytase (383 aa).

Positions methionine 1–alanine 26 are cleaved as a signal peptide. Residues lysine 27 to lysine 29 constitute a propeptide that is removed on maturation. Positions leucine 30–isoleucine 362 constitute a BPP domain.

Ca(2+) is required as a cofactor.

It is found in the secreted. The enzyme catalyses 1D-myo-inositol hexakisphosphate + H2O = 1D-myo-inositol 1,2,4,5,6-pentakisphosphate + phosphate. Its function is as follows. Catalyzes the hydrolysis of inorganic orthophosphate from phytate. Only phytate, ADP, and ATP were hydrolyzed (100, 75, and 50% of the relative activity, respectively). The protein is 3-phytase (phyC) of Bacillus subtilis.